Reading from the N-terminus, the 216-residue chain is Uracil phosphoribosyltransferase (216 aa).

Residues Arg-85, Arg-110, and 135 to 143 (DPMVATGYS) contribute to the 5-phospho-alpha-D-ribose 1-diphosphate site. Uracil-binding positions include Ile-200 and 205 to 207 (GDA). Asp-206 is a 5-phospho-alpha-D-ribose 1-diphosphate binding site.

Belongs to the UPRTase family. Mg(2+) serves as cofactor.

It carries out the reaction UMP + diphosphate = 5-phospho-alpha-D-ribose 1-diphosphate + uracil. It participates in pyrimidine metabolism; UMP biosynthesis via salvage pathway; UMP from uracil: step 1/1. Its activity is regulated as follows. Allosterically activated by GTP. Functionally, catalyzes the conversion of uracil and 5-phospho-alpha-D-ribose 1-diphosphate (PRPP) to UMP and diphosphate. In Burkholderia cenocepacia (strain ATCC BAA-245 / DSM 16553 / LMG 16656 / NCTC 13227 / J2315 / CF5610) (Burkholderia cepacia (strain J2315)), this protein is Uracil phosphoribosyltransferase.